A 280-amino-acid polypeptide reads, in one-letter code: Cobalt import ATP-binding protein CbiO (280 aa).

Residues 2–236 form the ABC transporter domain; it reads IEVRDLRFHY…GDWLRQQGLG (235 aa). Residue 36-43 coordinates ATP; that stretch reads GANGCGKT.

It belongs to the ABC transporter superfamily. Cobalt importer (TC 3.A.1.18.1) family. Forms an energy-coupling factor (ECF) transporter complex composed of an ATP-binding protein (A component, CbiO), a transmembrane protein (T component, CbiQ) and 2 possible substrate-capture proteins (S components, CbiM and CbiN) of unknown stoichimetry.

It is found in the cell inner membrane. It functions in the pathway cofactor biosynthesis; adenosylcobalamin biosynthesis. In terms of biological role, part of the energy-coupling factor (ECF) transporter complex CbiMNOQ involved in cobalt import. Presumably responsible for energy coupling to the transport system. The protein is Cobalt import ATP-binding protein CbiO of Syntrophus aciditrophicus (strain SB).